Here is a 1366-residue protein sequence, read N- to C-terminus: DNA-directed RNA polymerase subunit beta' (1366 aa).

Basic residues predominate over residues 1–20 (MTSSKPKKTSRVRKTTKNSK). The interval 1–33 (MTSSKPKKTSRVRKTTKNSKKNNPVTMPALAKT) is disordered. Cys-248, Cys-315, Cys-322, and Cys-325 together coordinate Zn(2+). The disordered stretch occupies residues 1291–1366 (YTVDMPQSPA…LQEEGLLSDE (76 aa)). Low complexity predominate over residues 1354–1366 (LEGLQEEGLLSDE).

The protein belongs to the RNA polymerase beta' chain family. RpoC2 subfamily. As to quaternary structure, in cyanobacteria the RNAP catalytic core is composed of 2 alpha, 1 beta, 1 beta', 1 gamma and 1 omega subunit. When a sigma factor is associated with the core the holoenzyme is formed, which can initiate transcription. Requires Zn(2+) as cofactor.

It catalyses the reaction RNA(n) + a ribonucleoside 5'-triphosphate = RNA(n+1) + diphosphate. Its function is as follows. DNA-dependent RNA polymerase catalyzes the transcription of DNA into RNA using the four ribonucleoside triphosphates as substrates. In Prochlorococcus marinus (strain AS9601), this protein is DNA-directed RNA polymerase subunit beta'.